A 240-amino-acid polypeptide reads, in one-letter code: Phosphoenolpyruvate guanylyltransferase (240 aa).

Phosphoenolpyruvate is bound by residues T161, G178, and S181.

It belongs to the CofC family.

The enzyme catalyses phosphoenolpyruvate + GTP + H(+) = enolpyruvoyl-2-diphospho-5'-guanosine + diphosphate. It participates in cofactor biosynthesis; coenzyme F420 biosynthesis. Its function is as follows. Guanylyltransferase that catalyzes the activation of phosphoenolpyruvate (PEP) as enolpyruvoyl-2-diphospho-5'-guanosine, via the condensation of PEP with GTP. It is involved in the biosynthesis of coenzyme F420, a hydride carrier cofactor. The sequence is that of Phosphoenolpyruvate guanylyltransferase from Rhodococcus opacus (strain B4).